We begin with the raw amino-acid sequence, 267 residues long: 1-(5-phosphoribosyl)-5-[(5-phosphoribosylamino)methylideneamino] imidazole-4-carboxamide isomerase (267 aa).

The protein belongs to the HisA/HisF family.

It localises to the cytoplasm. The catalysed reaction is 1-(5-phospho-beta-D-ribosyl)-5-[(5-phospho-beta-D-ribosylamino)methylideneamino]imidazole-4-carboxamide = 5-[(5-phospho-1-deoxy-D-ribulos-1-ylimino)methylamino]-1-(5-phospho-beta-D-ribosyl)imidazole-4-carboxamide. The protein operates within amino-acid biosynthesis; L-histidine biosynthesis; L-histidine from 5-phospho-alpha-D-ribose 1-diphosphate: step 4/9. The sequence is that of 1-(5-phosphoribosyl)-5-[(5-phosphoribosylamino)methylideneamino] imidazole-4-carboxamide isomerase (HIS6) from Kluyveromyces lactis (strain ATCC 8585 / CBS 2359 / DSM 70799 / NBRC 1267 / NRRL Y-1140 / WM37) (Yeast).